We begin with the raw amino-acid sequence, 311 residues long: Ribosomal RNA small subunit methyltransferase H (311 aa).

Residues 32 to 34 (AGH), Asp-52, Phe-79, Asp-100, and Gln-107 contribute to the S-adenosyl-L-methionine site. The segment at 287–311 (TASQEELEENNRARSAKLRIAEKRK) is disordered. Over residues 300–311 (RSAKLRIAEKRK) the composition is skewed to basic residues.

It belongs to the methyltransferase superfamily. RsmH family.

The protein resides in the cytoplasm. The enzyme catalyses cytidine(1402) in 16S rRNA + S-adenosyl-L-methionine = N(4)-methylcytidine(1402) in 16S rRNA + S-adenosyl-L-homocysteine + H(+). Functionally, specifically methylates the N4 position of cytidine in position 1402 (C1402) of 16S rRNA. This Bacillus subtilis (strain 168) protein is Ribosomal RNA small subunit methyltransferase H.